Here is a 247-residue protein sequence, read N- to C-terminus: ATP synthase subunit a, plastid (247 aa).

A run of 5 helical transmembrane segments spans residues 33–53, 95–115, 134–154, 199–219, and 220–240; these read FLVH…LLGS, VPFI…GALL, INTT…AGIL, LVVV…VMLL, and GLFT…AYIG.

It belongs to the ATPase A chain family. As to quaternary structure, F-type ATPases have 2 components, CF(1) - the catalytic core - and CF(0) - the membrane proton channel. CF(1) has five subunits: alpha(3), beta(3), gamma(1), delta(1), epsilon(1). CF(0) has four main subunits: a, b, b' and c.

It localises to the plastid membrane. Its function is as follows. Key component of the proton channel; it plays a direct role in the translocation of protons across the membrane. In Cuscuta exaltata (Tall dodder), this protein is ATP synthase subunit a, plastid.